The sequence spans 606 residues: EPM2A-interacting protein 1 (606 aa).

Phosphoserine is present on Ser147.

In terms of assembly, interacts with EPM2A.

It localises to the endoplasmic reticulum. The polypeptide is EPM2A-interacting protein 1 (Epm2aip1) (Mus musculus (Mouse)).